The primary structure comprises 711 residues: MLNFFAAAPKGFEYSLAQELTEFGATEIKESVAGVYFTAPLTLAYRITLWTRLASRIVLVIYKGPCESAEQLYNAAYCIDWSAHFSNRNTFSIDFHGTGGFINNTQFGALKIKDAIVDRFRDDGDARPNVARIDADIKVDAHFRNGVITIAMNFSGPSLHQRGYRSTTGEAPLKENLAANMLVRSGWKAAPTTLLDPFCGSGTVLIEAALMAADIAPGLQRNRFGFEHWRRHDKATWHEIVEEAKARASLGVKRCEVKFYGSDIDSRLVALAKRNAQNAGVLELIEFNVANALNVEPPAAEGYLITNPPYGERLGSVSELLQLYYQLGDKFKKEFGGWKVAMLCSDIELISALKLKADKQMKMFNGALECAFNLYTLHAQSTRRDTPVLPEGVDIADIAPAFANRIKKNAKQFEKWAQKEGIDSYRLYDADIPEYNVAVDKYLDYVVVQEYMAPASIPEAVTKRRLSDVLLALPAAIGVDPHKIIMKTRERQKGTNQYQKLDERKLELITTEYGAKFKLNLTGYLDTGLFLDHRLTRRLVGQKSKGRRVLNLFSYTGSASVHAALGGAKSVTTVDMSNTYLAWAKENFALNNLSGKQYEFVQADCLQWIRDCNEQYDLIFIDPPTFSNSKRMEDSFDVQRDHVNLLGMLIKLLSPNGELVFSNNKRKFKMDTETLTKMKIKVQNIDDMTLPLDYKRNPHIHNTWLITHADK.

In terms of domain architecture, THUMP spans 43 to 154; it reads LAYRITLWTR…NGVITIAMNF (112 aa).

This sequence belongs to the methyltransferase superfamily. RlmKL family.

It is found in the cytoplasm. The catalysed reaction is guanosine(2445) in 23S rRNA + S-adenosyl-L-methionine = N(2)-methylguanosine(2445) in 23S rRNA + S-adenosyl-L-homocysteine + H(+). The enzyme catalyses guanosine(2069) in 23S rRNA + S-adenosyl-L-methionine = N(2)-methylguanosine(2069) in 23S rRNA + S-adenosyl-L-homocysteine + H(+). Specifically methylates the guanine in position 2445 (m2G2445) and the guanine in position 2069 (m7G2069) of 23S rRNA. The polypeptide is Ribosomal RNA large subunit methyltransferase K/L (Shewanella oneidensis (strain ATCC 700550 / JCM 31522 / CIP 106686 / LMG 19005 / NCIMB 14063 / MR-1)).